The chain runs to 902 residues: Cytosolic 10-formyltetrahydrofolate dehydrogenase (902 aa).

Positions 1–310 (MKIAVIGQSL…PASQYFKTAD (310 aa)) are hydrolase domain. 88–90 (QFI) provides a ligand contact to (6R)-10-formyltetrahydrofolate. The active-site Proton donor is His106. (6R)-10-formyltetrahydrofolate is bound at residue Asp142. One can recognise a Carrier domain in the interval 318–395 (EEEQKVSEEI…EFIQMVVRRM (78 aa)). Ser354 carries the post-translational modification O-(pantetheine 4'-phosphoryl)serine. Positions 417 to 902 (TVKIPHQLFI…LKTKAVTIEY (486 aa)) are aldehyde dehydrogenase domain. NADP(+)-binding positions include 571-573 (IPW), 597-600 (KPAQ), 630-635 (GSLIGQ), 650-651 (GS), and 673-674 (EL). Glu673 serves as the catalytic Proton acceptor. Cys707 serves as the catalytic Proton donor. Residues Lys757 and 804-806 (ESF) each bind NADP(+).

The protein in the N-terminal section; belongs to the GART family. It in the C-terminal section; belongs to the aldehyde dehydrogenase family. ALDH1L subfamily. As to quaternary structure, homotetramer. In terms of processing, phosphopantetheinylation at Ser-354 by AASDHPPT is required for the formyltetrahydrofolate dehydrogenase activity.

The protein localises to the cytoplasm. Its subcellular location is the cytosol. The catalysed reaction is (6R)-10-formyltetrahydrofolate + NADP(+) + H2O = (6S)-5,6,7,8-tetrahydrofolate + CO2 + NADPH + H(+). In terms of biological role, cytosolic 10-formyltetrahydrofolate dehydrogenase that catalyzes the NADP(+)-dependent conversion of 10-formyltetrahydrofolate to tetrahydrofolate and carbon dioxide. May also have an NADP(+)-dependent aldehyde dehydrogenase activity towards formaldehyde, acetaldehyde, propionaldehyde, and benzaldehyde. The protein is Cytosolic 10-formyltetrahydrofolate dehydrogenase (aldh1l1) of Xenopus laevis (African clawed frog).